Here is a 1350-residue protein sequence, read N- to C-terminus: MEEPKCLQREMYKSVMTENYQCVLSLGYPIRKPEIVSMMEVGEELWSKNDSARPGQKEVEGETPKESDWAAENCKRAQMHKEVLDLDTLAAVKSEPVEEGSNSAKKSHICSHYGKLFSCYAAVVRHQRMHQLQKSHHCPHCKKSFVQRSDFIKHQRTHTGERPYQCVECQKKFTERSALVNHQRTHTGERPYTCLDCQKTFNQRSALTKHRRTHTGERPYRCSVCSKSFIQNSDLVKHLRTHTGEKPYECPLCVKRFAESSALMKHKRTHSTHRPFRCSECSRSFTHNSDLTAHMRKHTEFRNVLNLDSVVGTDPLSSQNVASSPYSCSKCRKTFKRWKSFLNHQQTHSREKPYLCSHCNKGFIQNSDLVKHFRTHTGERPYQCAECHKGFIQKSDLVKHLRTHTGEKPFKCSHCDKKFTERSALAKHQRTHTGEKPYKCSDCGKEFTQRSNLILHQRIHTGERPYKCTLCDRTFIQNSDLVKHQKVHANLPLSDPHTANSPHKCSKCDLTFSHWSTFMKHSKLHSGEKKFQCAECKKGFTQKSDLVKHIRVHTGEKPFKCLLCKKSFSQNSDLHKHWRIHTGEKPFPCYTCDKSFTERSALIKHHRTHTGERPHKCSVCQKGFIQKSALTKHSRTHTGEKPYPCTQCGKSFIQNSDLVKHQRIHTGEKPYHCTECNKRFTEGSSLVKHRRTHSGEKPYRCPQCEKTFIQSSDLVKHLVVHNGENPPAATAFHEILIRRENLTRSEPDPYPCTECGKVFHQRPALLKHLRTHKTEKRYPCNECDKSFFQTSDLVKHLRTHTGERPYHCPECNKGFIQNSDLVKHQRTHTGERPYTCSQCDKGFIQRSALTKHMRTHTGEKPYKCEQCQKCFIQNSDLVKHQRIHTGEKPYHCPDCDKRFTEGSSLIKHQRIHSRIKPYPCGVCGKSFSQSSNLLKHLKCHSEQNPPVALSSELGFVAETQTHPDPVDHIVYGDTASYISPEAAGERSFKCNDCGKCFAHRSVLIKHVRIHTGERPYKCSQCTRSFIQKSDLVKHYRTHTGERPYKCGLCERSFVEKSALSRHQRVHKNESPVLNSAMEQQQVTYWGESKDDPNSLVPQLHVIKEEESPHIVNAYSPLSILQSYFPPILEPKGTPRYSCSECGKCFTHRSVFLKHWRMHTGEQPYTCKECGKSFSQSSALVKHVRIHTGEKPYPCSTCGKSFIQKSDLAKHQRIHTGEKPYTCTVCGKKFIDRSSVVKHSRTHTGERPYKCNECTKGFVQKSDLVKHMRTHTGEKPYGCNCCDRSFSTHSASVRHQRMCNTGRPYQDEEYENSLFYSADITWKGDYAQLLQIPCGLEEPMKAIGWISEVAL.

The KRAB domain occupies 1–58; the sequence is MEEPKCLQREMYKSVMTENYQCVLSLGYPIRKPEIVSMMEVGEELWSKNDSARPGQKE. Residues 47-68 are disordered; the sequence is SKNDSARPGQKEVEGETPKESD. 37 C2H2-type zinc fingers span residues 108–130, 136–158, 164–186, 192–214, 220–242, 248–270, 276–298, 326–348, 354–376, 382–404, 410–432, 438–460, 466–488, 503–525, 531–553, 559–581, 587–609, 615–637, 643–665, 671–693, 699–721, 750–772, 778–800, 806–828, 834–856, 862–884, 890–912, 918–940, 988–1010, 1016–1038, 1044–1066, 1136–1158, 1164–1186, 1192–1214, 1220–1242, 1248–1270, and 1276–1298; these read HICS…QRMH, HHCP…QRTH, YQCV…QRTH, YTCL…RRTH, YRCS…LRTH, YECP…KRTH, FRCS…MRKH, YSCS…QQTH, YLCS…FRTH, YQCA…LRTH, FKCS…QRTH, YKCS…QRIH, YKCT…QKVH, HKCS…SKLH, FQCA…IRVH, FKCL…WRIH, FPCY…HRTH, HKCS…SRTH, YPCT…QRIH, YHCT…RRTH, YRCP…LVVH, YPCT…LRTH, YPCN…LRTH, YHCP…QRTH, YTCS…MRTH, YKCE…QRIH, YHCP…QRIH, YPCG…LKCH, FKCN…VRIH, YKCS…YRTH, YKCG…QRVH, YSCS…WRMH, YTCK…VRIH, YPCS…QRIH, YTCT…SRTH, YKCN…MRTH, and YGCN…QRMC.

This sequence belongs to the krueppel C2H2-type zinc-finger protein family. In terms of processing, phosphorylated. Phosphorylation enhances RNA binding. Expressed in oocytes, and in specialized cell types such as neural retina cones in adults.

It is found in the cytoplasm. Functionally, binds to poly-G sequences in RNA. May function in post-translational regulation processes. The chain is Zinc finger protein Xfin from Xenopus laevis (African clawed frog).